The primary structure comprises 304 residues: Coenzyme PQQ synthesis protein B (304 aa).

Belongs to the PqqB family.

It participates in cofactor biosynthesis; pyrroloquinoline quinone biosynthesis. In terms of biological role, may be involved in the transport of PQQ or its precursor to the periplasm. In Pseudomonas aeruginosa (strain LESB58), this protein is Coenzyme PQQ synthesis protein B.